The primary structure comprises 349 residues: Isopentenyl-diphosphate delta-isomerase (349 aa).

Arg-9–Lys-10 is a substrate binding site. FMN is bound by residues Ala-65–Thr-67, Ser-95, and Asn-124. Ser-95–His-97 contributes to the substrate binding site. A substrate-binding site is contributed by Gln-154. Glu-155 is a binding site for Mg(2+). FMN is bound by residues Lys-186, Ser-211, Thr-216, Gly-262–Arg-264, and Ser-283–Arg-284.

The protein belongs to the IPP isomerase type 2 family. Homooctamer. Dimer of tetramers. Requires FMN as cofactor. NADPH serves as cofactor. The cofactor is Mg(2+).

Its subcellular location is the cytoplasm. It catalyses the reaction isopentenyl diphosphate = dimethylallyl diphosphate. Functionally, involved in the biosynthesis of isoprenoids. Catalyzes the 1,3-allylic rearrangement of the homoallylic substrate isopentenyl (IPP) to its allylic isomer, dimethylallyl diphosphate (DMAPP). The chain is Isopentenyl-diphosphate delta-isomerase from Staphylococcus aureus (strain USA300 / TCH1516).